Here is a 79-residue protein sequence, read N- to C-terminus: MSFEVFEKLESKVQQAIDTITLLQMEIEELKDKNNTLSQEVQAASGNHESLVRENQQLKEEQHVWQDRLRALLGKMEEV.

A coiled-coil region spans residues 4-78; sequence EVFEKLESKV…LRALLGKMEE (75 aa).

It belongs to the ZapB family. In terms of assembly, homodimer. The ends of the coiled-coil dimer bind to each other, forming polymers. Interacts with FtsZ.

The protein localises to the cytoplasm. In terms of biological role, non-essential, abundant cell division factor that is required for proper Z-ring formation. It is recruited early to the divisome by direct interaction with FtsZ, stimulating Z-ring assembly and thereby promoting cell division earlier in the cell cycle. Its recruitment to the Z-ring requires functional FtsA or ZipA. The polypeptide is Cell division protein ZapB (Serratia proteamaculans (strain 568)).